Consider the following 190-residue polypeptide: LIM domain-containing protein WLIM1 (190 aa).

Alanine 2 carries the N-acetylalanine modification. The LIM zinc-binding 1 domain maps to 8-68 (QKCMACDKTV…RPHFDQNFKR (61 aa)). A disordered region spans residues 74–98 (KSFEGTPKIGKPDRPLEGERPAGTK). Basic and acidic residues predominate over residues 83 to 95 (GKPDRPLEGERPA). Residues 108–168 (EKCVGCDKTV…KHHHIQLIKE (61 aa)) enclose the LIM zinc-binding 2 domain.

As to quaternary structure, interacts with F-actin. As to expression, expressed in roots, leaves, stems, flowers and siliques. Not detected in pollen.

The protein resides in the cytoplasm. It localises to the cytoskeleton. Its function is as follows. Binds to actin filaments and promotes cross-linking into thick bundles. Has an actin-stabilizing activity. The actin regulatory activities are not regulated by pH and [Ca(2+)]. The sequence is that of LIM domain-containing protein WLIM1 from Arabidopsis thaliana (Mouse-ear cress).